Consider the following 204-residue polypeptide: Allurin (204 aa).

A signal peptide spans 1 to 19; sequence MDTFNFIICISALFHSTYG. One can recognise an SCP domain in the interval 36-138; sequence VDLHNLLRRS…DKMIGHYTQV (103 aa). Residues 140–161 traverse the membrane as a helical segment; the sequence is WAKTYLLGCGLAFCPGNYYPYV.

The protein belongs to the CRISP family. As to expression, expressed only in oviduct.

It localises to the membrane. The protein localises to the secreted. Functionally, involved in sperm chemoattraction. This chain is Allurin (crisp-a), found in Xenopus tropicalis (Western clawed frog).